Consider the following 455-residue polypeptide: Cysteine--tRNA ligase (455 aa).

Cys-28 provides a ligand contact to Zn(2+). Residues 30-40 (MTVYDYCHLGH) carry the 'HIGH' region motif. Zn(2+) is bound by residues Cys-209, His-234, and Glu-238. The 'KMSKS' region motif lies at 266–270 (KMSKS). Lys-269 provides a ligand contact to ATP.

This sequence belongs to the class-I aminoacyl-tRNA synthetase family. As to quaternary structure, monomer. It depends on Zn(2+) as a cofactor.

The protein localises to the cytoplasm. It carries out the reaction tRNA(Cys) + L-cysteine + ATP = L-cysteinyl-tRNA(Cys) + AMP + diphosphate. The polypeptide is Cysteine--tRNA ligase (Methylobacillus flagellatus (strain ATCC 51484 / DSM 6875 / VKM B-1610 / KT)).